Consider the following 529-residue polypeptide: Zinc finger protein 572 (529 aa).

The disordered stretch occupies residues 1–62; the sequence is MEQEKKLLVS…EWSKRHRPQH (62 aa). Residues lysine 5 and lysine 6 each participate in a glycyl lysine isopeptide (Lys-Gly) (interchain with G-Cter in SUMO2) cross-link. Over residues 26-35 the composition is skewed to polar residues; sequence TGDTSMNNLE. Residues 36-55 show a composition bias toward basic and acidic residues; the sequence is TVHHNNSKADKLKEKPSEWS. C2H2-type zinc fingers lie at residues 132-154, 160-182, 188-210, 216-238, 244-266, 272-294, 300-322, 328-350, 384-406, 412-434, 440-462, and 468-490; these read YKCS…QRTH, YKCS…LRMH, YQCG…ERTH, YKCP…HRSH, YECS…QRTH, YKCP…QRTH, YKCL…QRIH, YQCP…QKMH, YRCC…QRTH, YRCS…QRTH, YKCP…RRTH, and YKCT…RKIH.

It belongs to the krueppel C2H2-type zinc-finger protein family.

Its subcellular location is the nucleus. May be involved in transcriptional regulation. This chain is Zinc finger protein 572 (ZNF572), found in Homo sapiens (Human).